A 369-amino-acid chain; its full sequence is tRNA/tmRNA (uracil-C(5))-methyltransferase (369 aa).

S-adenosyl-L-methionine contacts are provided by glutamine 190, tyrosine 218, asparagine 223, glutamate 239, and aspartate 301. Catalysis depends on cysteine 326, which acts as the Nucleophile. Glutamate 360 serves as the catalytic Proton acceptor.

It belongs to the class I-like SAM-binding methyltransferase superfamily. RNA M5U methyltransferase family. TrmA subfamily.

The catalysed reaction is uridine(54) in tRNA + S-adenosyl-L-methionine = 5-methyluridine(54) in tRNA + S-adenosyl-L-homocysteine + H(+). It catalyses the reaction uridine(341) in tmRNA + S-adenosyl-L-methionine = 5-methyluridine(341) in tmRNA + S-adenosyl-L-homocysteine + H(+). Functionally, dual-specificity methyltransferase that catalyzes the formation of 5-methyluridine at position 54 (m5U54) in all tRNAs, and that of position 341 (m5U341) in tmRNA (transfer-mRNA). The chain is tRNA/tmRNA (uracil-C(5))-methyltransferase from Vibrio vulnificus (strain YJ016).